Here is a 330-residue protein sequence, read N- to C-terminus: PDZ and LIM domain protein 4 (330 aa).

The region spanning 1–84 (MTHSVTLRGP…HLTLSVSRPE (84 aa)) is the PDZ domain. 2 disordered regions span residues 104–153 (DPES…SNEA) and 219–242 (EAGE…ASKL). S107, S111, S115, S118, S119, S124, and S134 each carry phosphoserine. A compositionally biased stretch (polar residues) spans 108 to 122 (QDCSPATSRRSSVSG). The LIM zinc-binding domain maps to 255-305 (CTRCGHGIVGTIVKARDKLYHPECFMCSDCGLNLKQRGYFFLDERLYCENH).

In terms of assembly, homodimer. Interacts (via C-terminus only or via combined C-terminus and LIM domain, but not LIM domain only) with PTPN13 (via the second or fourth PDZ domains). Found in a complex with PTPN13 and TRIP6. Interacts (via PDZ domain) with ACTN1 and ACTN2 (via C-terminal SDL residues). Interacts (via PDZ domain) with TRIP6 (via the second LIM domain or via the third LIM domain plus C-terminus). Interacts (via LIM domain) with GRIA1 (via C-terminus); this interaction as well as the interaction with alpha-actinin is required for their colocalization in early endosomes. Interacts with PDLIM1. Forms (via LIM domain) a heterodimer with PDLIM3. Interacts directly with SRC (via kinase domain and to a lesser extent the SH2 domain). In terms of processing, phosphorylated on tyrosine residue(s). Can be dephosphorylated by PTPN13. Expressed in several non-muscle tissues including lung, brain, ovary and uterus, and especially in epithelial cells at 14 dpc. In the uterus, high expression in the glandular epithelium, but absent in the simple columnar epithelium lining the uterus cavity.

Its subcellular location is the cytoplasm. It is found in the cytoskeleton. The protein resides in the cell projection. It localises to the dendritic spine. The protein localises to the early endosome membrane. Its subcellular location is the recycling endosome membrane. It is found in the nucleus. The protein resides in the perinuclear region. It localises to the lamellipodium. The protein localises to the synapse. Its subcellular location is the synaptosome. Suppresses SRC activation by recognizing and binding to active SRC and facilitating PTPN13-mediated dephosphorylation of SRC 'Tyr-419' leading to its inactivation. Inactivated SRC dissociates from this protein allowing the initiation of a new SRC inactivation cycle. Involved in reorganization of the actin cytoskeleton. In nonmuscle cells, binds to ACTN1 (alpha-actinin-1), increases the affinity of ACTN1 to F-actin (filamentous actin), and promotes formation of actin stress fibers. Involved in regulation of the synaptic AMPA receptor transport in dendritic spines of hippocampal pyramidal neurons directing the receptors toward an insertion at the postsynaptic membrane. Links endosomal surface-internalized GRIA1-containing AMPA receptors to the alpha-actinin/actin cytoskeleton. Increases AMPA receptor-mediated excitatory postsynaptic currents in neurons. This chain is PDZ and LIM domain protein 4 (Pdlim4), found in Mus musculus (Mouse).